Here is a 265-residue protein sequence, read N- to C-terminus: Thiazole synthase (265 aa).

Residue K103 is the Schiff-base intermediate with DXP of the active site. Residues G164, 190-191, and 212-213 contribute to the 1-deoxy-D-xylulose 5-phosphate site; these read AG and NT.

It belongs to the ThiG family. As to quaternary structure, homotetramer. Forms heterodimers with either ThiH or ThiS.

The protein resides in the cytoplasm. The catalysed reaction is [ThiS sulfur-carrier protein]-C-terminal-Gly-aminoethanethioate + 2-iminoacetate + 1-deoxy-D-xylulose 5-phosphate = [ThiS sulfur-carrier protein]-C-terminal Gly-Gly + 2-[(2R,5Z)-2-carboxy-4-methylthiazol-5(2H)-ylidene]ethyl phosphate + 2 H2O + H(+). Its pathway is cofactor biosynthesis; thiamine diphosphate biosynthesis. Functionally, catalyzes the rearrangement of 1-deoxy-D-xylulose 5-phosphate (DXP) to produce the thiazole phosphate moiety of thiamine. Sulfur is provided by the thiocarboxylate moiety of the carrier protein ThiS. In vitro, sulfur can be provided by H(2)S. The chain is Thiazole synthase from Bordetella avium (strain 197N).